The chain runs to 448 residues: Trigger factor (448 aa).

Residues 163–248 enclose the PPIase FKBP-type domain; it reads GDIVVIDFDG…VKDIRVPKAA (86 aa).

Belongs to the FKBP-type PPIase family. Tig subfamily.

Its subcellular location is the cytoplasm. It carries out the reaction [protein]-peptidylproline (omega=180) = [protein]-peptidylproline (omega=0). Functionally, involved in protein export. Acts as a chaperone by maintaining the newly synthesized protein in an open conformation. Functions as a peptidyl-prolyl cis-trans isomerase. The polypeptide is Trigger factor (Rhodospirillum centenum (strain ATCC 51521 / SW)).